The primary structure comprises 110 residues: V-type proton ATPase subunit G1 (110 aa).

Met1 carries the post-translational modification N-acetylmethionine. The interval Lys60 to Asp80 is disordered.

It belongs to the V-ATPase G subunit family. In terms of assembly, V-ATPase is a heteromultimeric enzyme composed of a peripheral catalytic V1 complex (components A to H) attached to an integral membrane V0 proton pore complex (components: a, c, c'', d and e).

The protein resides in the cell membrane. Its subcellular location is the vacuole membrane. Its function is as follows. Catalytic subunit of the peripheral V1 complex of vacuolar ATPase (V-ATPase). V-ATPase is responsible for acidifying a variety of intracellular compartments in eukaryotic cells. In Arabidopsis thaliana (Mouse-ear cress), this protein is V-type proton ATPase subunit G1 (VHA-G1).